The following is a 342-amino-acid chain: Protein-glutamate methylesterase/protein-glutamine glutaminase 3 (342 aa).

Residues 3–120 (RVLVVEDMPT…SPGFADDARR (118 aa)) form the Response regulatory domain. A 4-aspartylphosphate modification is found at D54. The 191-residue stretch at 152–342 (DVPRGRVVAV…ADRLALWLRR (191 aa)) folds into the CheB-type methylesterase domain. Active-site residues include S164, H191, and D285.

This sequence belongs to the CheB family. Phosphorylated by CheA. Phosphorylation of the N-terminal regulatory domain activates the methylesterase activity.

Its subcellular location is the cytoplasm. The catalysed reaction is [protein]-L-glutamate 5-O-methyl ester + H2O = L-glutamyl-[protein] + methanol + H(+). It carries out the reaction L-glutaminyl-[protein] + H2O = L-glutamyl-[protein] + NH4(+). Its function is as follows. Involved in chemotaxis. Part of a chemotaxis signal transduction system that modulates chemotaxis in response to various stimuli. Catalyzes the demethylation of specific methylglutamate residues introduced into the chemoreceptors (methyl-accepting chemotaxis proteins or MCP) by CheR. Also mediates the irreversible deamidation of specific glutamine residues to glutamic acid. The protein is Protein-glutamate methylesterase/protein-glutamine glutaminase 3 of Anaeromyxobacter dehalogenans (strain 2CP-C).